The following is a 630-amino-acid chain: MKALLSLLTAVAVATATPLDLSLRALPNAPDGYTPAKVSCPATRPSIRGAGSLSPNETSWLEIRRKNTVQPMTDLLGRLNLGFDAAGYIDRVSSNASNLPNIAIAVSGGGYRALTNGAGAIKAFDSRTQGSTQSGHLGGLLQSATYVSGLSGGGWLVGSVYLNNFTTIADLQSGDHGNVWQFSTSILEGPKAKHLQFLSTADYWKDLLKAVDGKSDAGFNTSLTDYWGRALSYQFINDRTGNGGLSYTWSSIALTDPFRRGEMPLPILVADGRNPGELLIGSNSTVYEFNPWEFGSFDPSIFGFAPLEYLGSRFDNGQLPRGEPCVRGFDNAGFVMGTSSSLFNQFILRLNKTDLPDLAKDVFSKILTAIGRDGDDIAVYGPNPFYGYRNSTAAYSRSRELDVVDGGEDGQNIPLHPLIQPVRHVDVIFAVDSSADGPYSWPNGSALVATYERSLNSSGIGNGTVFPAVPDVNTFVNLGLNTRPTFFGCDPANLSAPAPLVVYLPNAPYSTHSNTSTFQLAYSDSERDEIITNGYNVVTRGNATVDKSWPSCVGCAILQRSMYRTNTSMPAVCNSCFKEYCWNGTVDSKTPRTYEPTLLLGSTSTNAAYTQGVTWLVGILAVGVAMGMTA.

The N-terminal stretch at 1-16 is a signal peptide; the sequence is MKALLSLLTAVAVATA. Positions 39-587 constitute a PLA2c domain; it reads SCPATRPSIR…KEYCWNGTVD (549 aa). N-linked (GlcNAc...) asparagine glycans are attached at residues Asn56, Asn95, Asn164, Asn220, Asn283, Asn351, Asn390, Asn443, Asn456, Asn462, Asn493, Asn514, Asn542, Asn566, and Asn583. Asn606 carries GPI-like-anchor amidated asparagine lipidation. Positions 607 to 630 are cleaved as a propeptide — removed in mature form; that stretch reads AAYTQGVTWLVGILAVGVAMGMTA.

It belongs to the lysophospholipase family. Post-translationally, the GPI-like anchor contains a phosphoceramide lipid group.

It localises to the cell membrane. It catalyses the reaction a 1-acyl-sn-glycero-3-phosphocholine + H2O = sn-glycerol 3-phosphocholine + a fatty acid + H(+). Catalyzes the release of fatty acids from lysophospholipids. The chain is Lysophospholipase 3 (plb3) from Aspergillus fumigatus (strain CBS 144.89 / FGSC A1163 / CEA10) (Neosartorya fumigata).